We begin with the raw amino-acid sequence, 852 residues long: MAHETPDTPGETYDFRAIEAEWSEVWEREQPFRTPDASDSRPRKYILDMFPYPSGDLHMGHAEAFALGDAVARYWRQQGFNVLHPIGWDSFGLPAENAAIKRGVDPREWTYANIETQKQSMKRYGLSFDWERELHTSDPEYYRWNQWLFLKMHEKGLAYRKDSWVNWDPVDQTVLANEQVLPDGTSDRSGAVVVKKKLTQWYLRITDYADRLVDDLNQLEGTWPAKVLSMQRNWIGRSIGAEVDFVVEGRDEPVTVFTTRPDTLHGATFMVVAPDSDLAAELVEGASEEVRESFRGYLERTQRLNEIERSTTDRPKTGIPLGLTAINPVNGERIPVWAADYVLADYGTGAVMAVPAHDQRDLDFARAFDLPVRVVVDTTQPVTGAIRIIPEDGELPDLEEVLPGRTGVALPGEGRLINSGSLNGLSKQPAIKRVIEQLEAEGRGRAAKNYRLRDWLISRQRFWGTPIPIVYDAEGSEIRVPEDQLPVRLPDTEGLDLTPKGKSPLAAATAWSNVPSPVDGSPATRDPDTMDTFMDSSWYWLRFLSPNDATKAFDPADADRWAPIDQYVGGVEHAILHLLYSRFITKVLFDLGYVTFTEPFSALLNQGMVLSGGSKMSKSKGGVDLGSEMDRHGVDAIRLTMAFAGPPEDDIDWEDVSPSGSAKFLARAWRLTGDITSAPEVEWKTGDEALRRVTHRFLAEAPGMLEAFKFNVVIARTMELVNAIRKTIDQGPGGGDAAVREATEVVAVALSLFAPYTAEDMWKRLGREGSVAFAGWRKADRNLLVQTTVTAVVQVDGKVRDKLEVDAKIGADELEALARETAGVRRSTAGRTIDKVIVRAPKIVSITTTPAP.

A 'HIGH' region motif is present at residues 51-61 (PYPSGDLHMGH). Positions 615-619 (KMSKS) match the 'KMSKS' region motif. K618 provides a ligand contact to ATP.

This sequence belongs to the class-I aminoacyl-tRNA synthetase family.

Its subcellular location is the cytoplasm. The enzyme catalyses tRNA(Leu) + L-leucine + ATP = L-leucyl-tRNA(Leu) + AMP + diphosphate. This Clavibacter sepedonicus (Clavibacter michiganensis subsp. sepedonicus) protein is Leucine--tRNA ligase.